Here is a 255-residue protein sequence, read N- to C-terminus: tRNA (guanine-N(7)-)-methyltransferase (255 aa).

S-adenosyl-L-methionine is bound by residues E64, E89, D116, and D138. The active site involves D138. Residues K142, D174, and 212–215 (TRYE) each bind substrate.

This sequence belongs to the class I-like SAM-binding methyltransferase superfamily. TrmB family.

The catalysed reaction is guanosine(46) in tRNA + S-adenosyl-L-methionine = N(7)-methylguanosine(46) in tRNA + S-adenosyl-L-homocysteine. The protein operates within tRNA modification; N(7)-methylguanine-tRNA biosynthesis. Its function is as follows. Catalyzes the formation of N(7)-methylguanine at position 46 (m7G46) in tRNA. This chain is tRNA (guanine-N(7)-)-methyltransferase, found in Rhodospirillum rubrum (strain ATCC 11170 / ATH 1.1.1 / DSM 467 / LMG 4362 / NCIMB 8255 / S1).